Consider the following 96-residue polypeptide: Cytochrome c-553 (96 aa).

The N-terminal stretch at 1-19 (MKKVIVALGVLAFANVLMA) is a signal peptide. Residues Cys-29, Cys-32, His-33, and Met-73 each contribute to the heme c site.

The protein belongs to the cytochrome c family. Binds 1 heme c group covalently per subunit.

Its subcellular location is the periplasm. Its function is as follows. Natural electron acceptor for a formate dehydrogenase. The chain is Cytochrome c-553 from Helicobacter pylori (strain J99 / ATCC 700824) (Campylobacter pylori J99).